The sequence spans 754 residues: 5-methyltetrahydropteroyltriglutamate--homocysteine methyltransferase (754 aa).

5-methyltetrahydropteroyltri-L-glutamate contacts are provided by residues Arg-17–Lys-20 and Lys-117. Residues Ile-431–Ser-433 and Glu-484 each bind L-homocysteine. L-methionine-binding positions include Ile-431–Ser-433 and Glu-484. Residues Arg-515–Cys-516 and Trp-561 each bind 5-methyltetrahydropteroyltri-L-glutamate. Asp-599 serves as a coordination point for L-homocysteine. Asp-599 lines the L-methionine pocket. Glu-605 contributes to the 5-methyltetrahydropteroyltri-L-glutamate binding site. Positions 641, 643, and 665 each coordinate Zn(2+). Catalysis depends on His-694, which acts as the Proton donor. A Zn(2+)-binding site is contributed by Cys-726.

The protein belongs to the vitamin-B12 independent methionine synthase family. Zn(2+) is required as a cofactor.

The enzyme catalyses 5-methyltetrahydropteroyltri-L-glutamate + L-homocysteine = tetrahydropteroyltri-L-glutamate + L-methionine. It functions in the pathway amino-acid biosynthesis; L-methionine biosynthesis via de novo pathway; L-methionine from L-homocysteine (MetE route): step 1/1. Functionally, catalyzes the transfer of a methyl group from 5-methyltetrahydrofolate to homocysteine resulting in methionine formation. The chain is 5-methyltetrahydropteroyltriglutamate--homocysteine methyltransferase from Pectobacterium atrosepticum (strain SCRI 1043 / ATCC BAA-672) (Erwinia carotovora subsp. atroseptica).